We begin with the raw amino-acid sequence, 607 residues long: Glutamyl-tRNA(Gln) amidotransferase subunit E (607 aa).

The disordered stretch occupies residues 399-428 (GVPEETRGANPDGTTRFLRPRPGAARMYPE).

This sequence belongs to the GatB/GatE family. GatE subfamily. Heterodimer of GatD and GatE.

It catalyses the reaction L-glutamyl-tRNA(Gln) + L-glutamine + ATP + H2O = L-glutaminyl-tRNA(Gln) + L-glutamate + ADP + phosphate + H(+). Functionally, allows the formation of correctly charged Gln-tRNA(Gln) through the transamidation of misacylated Glu-tRNA(Gln) in organisms which lack glutaminyl-tRNA synthetase. The reaction takes place in the presence of glutamine and ATP through an activated gamma-phospho-Glu-tRNA(Gln). The GatDE system is specific for glutamate and does not act on aspartate. This is Glutamyl-tRNA(Gln) amidotransferase subunit E from Pyrobaculum neutrophilum (strain DSM 2338 / JCM 9278 / NBRC 100436 / V24Sta) (Thermoproteus neutrophilus).